Reading from the N-terminus, the 355-residue chain is Guanine nucleotide-binding protein alpha-2 subunit (355 aa).

Residues 1-20 are disordered; it reads MCFGGRGKDDEAEASRSREL. One can recognise a G-alpha domain in the interval 33–355; sequence KEVKLLLLGA…IQRNLKQLIL (323 aa). The segment at 36–49 is G1 motif; sequence KLLLLGAGESGKST. GTP is bound by residues Glu-44, Ser-45, Gly-46, Lys-47, Ser-48, Thr-49, Asp-151, Leu-176, Thr-182, Gly-204, Asn-270, Lys-271, Asp-273, and Ala-328. Residue Ser-48 participates in Mg(2+) binding. The segment at 174-182 is G2 motif; that stretch reads DLLRSRLRT. Thr-182 is a Mg(2+) binding site. The interval 197-206 is G3 motif; it reads YRMFDVGGQR. The tract at residues 266–273 is G4 motif; it reads ILFLNKID. Residues 326 to 331 are G5 motif; that stretch reads TNATDT.

It belongs to the G-alpha family. G(q) subfamily. G proteins are composed of 3 units; alpha, beta and gamma. The alpha chain contains the guanine nucleotide binding site. The cofactor is Mg(2+).

Functionally, guanine nucleotide-binding proteins (G proteins) are involved as modulators or transducers in various transmembrane signaling systems. This chain is Guanine nucleotide-binding protein alpha-2 subunit (gna-2), found in Neurospora crassa (strain ATCC 24698 / 74-OR23-1A / CBS 708.71 / DSM 1257 / FGSC 987).